Here is a 976-residue protein sequence, read N- to C-terminus: Poly(ADP-ribose) glycohydrolase (976 aa).

M1 is modified (N-acetylmethionine). Residues 1-69 are disordered; the sequence is MNAGPGCEPC…GRAGQHRGSA (69 aa). Residues 1 to 456 form an A-domain region; the sequence is MNAGPGCEPC…LSPDKKWLGT (456 aa). Positions 10-16 match the Nuclear localization signal motif; sequence CTKRPRW. At S22 the chain carries Phosphoserine. A compositionally biased stretch (basic and acidic residues) spans 37–46; the sequence is RVLDPKDAHV. At S68 the chain carries Phosphoserine. A PIP-box (PCNA interacting peptide) motif is present at residues 76 to 83; the sequence is QKTITSWM. A phosphoserine mark is found at S133 and S137. Position 139 is a phosphothreonine (T139). Residues 183-350 are disordered; the sequence is SNANIDRSPQ…PSRFQARDAD (168 aa). Basic and acidic residues-rich tracts occupy residues 191-206 and 222-233; these read PQND…ENRD and TTEDEQAREAKS. S197 is subject to Phosphoserine. The residue at position 199 (T199) is a Phosphothreonine. A phosphoserine mark is found at S261, S264, S286, S291, S298, S302, and S316. Residues 316-331 are compositionally biased toward acidic residues; it reads SEADEETSPGFDEQED. Positions 332–342 are enriched in polar residues; sequence GSSSQTANKPS. Position 340 is an N6-acetyllysine (K340). S448 bears the Phosphoserine mark. Positions 610 to 795 are catalytic; it reads QPIPLLKQKM…TEQYSEYTGY (186 aa). A substrate-binding site is contributed by 726–727; the sequence is IE. D737 is a catalytic residue. Substrate contacts are provided by N740 and Q754. Catalysis depends on residues E755 and E756. Residues Y795 and 869 to 874 each bind substrate; that span reads NWGCGA.

Belongs to the poly(ADP-ribose) glycohydrolase family. Interacts with PCNA. Interacts with NUDT5. As to expression, ubiquitously expressed.

It localises to the nucleus. The protein localises to the cytoplasm. Its subcellular location is the mitochondrion. The protein resides in the mitochondrion matrix. It carries out the reaction [(1''-&gt;2')-ADP-alpha-D-ribose](n) + H2O = [(1''-&gt;2')-ADP-alpha-D-ribose](n-1) + ADP-D-ribose. In terms of biological role, poly(ADP-ribose) glycohydrolase that degrades poly(ADP-ribose) by hydrolyzing the ribose-ribose bonds present in poly(ADP-ribose). PARG acts both as an endo- and exoglycosidase, releasing poly(ADP-ribose) of different length as well as ADP-ribose monomers. It is however unable to cleave the ester bond between the terminal ADP-ribose and ADP-ribosylated residues, leaving proteins that are mono-ADP-ribosylated. Poly(ADP-ribose) is synthesized after DNA damage is only present transiently and is rapidly degraded by PARG. Required to prevent detrimental accumulation of poly(ADP-ribose) upon prolonged replicative stress, while it is not required for recovery from transient replicative stress. Responsible for the prevalence of mono-ADP-ribosylated proteins in cells, thanks to its ability to degrade poly(ADP-ribose) without cleaving the terminal protein-ribose bond. Required for retinoid acid-dependent gene transactivation, probably by removing poly(ADP-ribose) from histone demethylase KDM4D, allowing chromatin derepression at RAR-dependent gene promoters. Involved in the synthesis of ATP in the nucleus, together with PARP1, NMNAT1 and NUDT5. Nuclear ATP generation is required for extensive chromatin remodeling events that are energy-consuming. In Homo sapiens (Human), this protein is Poly(ADP-ribose) glycohydrolase.